The primary structure comprises 344 residues: Gas vesicle ATPase GvpN2 (344 aa).

The interval 1–55 is disordered; the sequence is MTDTSRNRKVRGSKIRSSRSDKRQSRGSEDKELKRLADARDTDSEQAGDRVGDAF. Positions 7–17 are enriched in basic residues; that stretch reads NRKVRGSKIRS. Residues 18–52 are compositionally biased toward basic and acidic residues; it reads SRSDKRQSRGSEDKELKRLADARDTDSEQAGDRVG. ATP is bound at residue 89 to 96; that stretch reads GPTGCGKT.

Belongs to the CbbQ/NirQ/NorQ/GpvN family. In terms of assembly, forms homodimers, a GvpN-GvpO heterodimer, interacts with GvpC and GvpL, might interact with GvpA.

It is found in the gas vesicle. The protein localises to the cytoplasm. It catalyses the reaction ATP + H2O = ADP + phosphate + H(+). In terms of biological role, an ATPase that functions in gas vesicle formation. A minor component of the gas vesicle, also found in soluble extracts. Gas vesicles are hollow, gas filled proteinaceous nanostructures found in several microbial planktonic microorganisms. They allow positioning of halobacteria at the optimal depth for growth in the poorly aerated, shallow brine pools of their habitat. Its function is as follows. Expression of 2 c-vac DNA fragments containing 2 divergently transcribed regions (gvpE-gvpF-gvpG-gvpH-gvpI-gvpJ-gvpK-gvpL-gvpM and gvpA-gvpC-gvpN-gvpO) allows H.volcanii to produce gas vesicles. The sequence is that of Gas vesicle ATPase GvpN2 from Halobacterium salinarum (strain ATCC 700922 / JCM 11081 / NRC-1) (Halobacterium halobium).